A 249-amino-acid polypeptide reads, in one-letter code: Protein-lysine 6-oxidase (249 aa).

Tyr-19 bears the Sulfotyrosine mark. Residues 45-249 (PDLVPDPYYI…YASGCTISPY (205 aa)) are lysyl-oxidase like. Cystine bridges form between Cys-70–Cys-76, Cys-123–Cys-172, Cys-156–Cys-162, Cys-183–Cys-193, and Cys-230–Cys-244. Cu cation-binding residues include His-124, His-126, and His-128. A cross-link (lysine tyrosylquinone (Lys-Tyr)) is located at residues 152 to 187 (KASFCLEDTSCDYGYHRRFACTAHTQGLSPGCYDTY). Tyr-187 is modified (2',4',5'-topaquinone).

It belongs to the lysyl oxidase family. Interacts with MFAP4. Interacts (via propeptide) with EFEMP2; this interaction is strong and facilitates formation of ternary complexes with ELN during elastic fiber assembly; this interaction limits interaction of EFEMP2 with FBLN5. Cu cation serves as cofactor. It depends on lysine tyrosylquinone residue as a cofactor. Post-translationally, the lysine tyrosylquinone cross-link (LTQ) is generated by condensation of the epsilon-amino group of a lysine with a topaquinone produced by oxidation of tyrosine. Proteolytically cleaved by BMP1 which removes the propeptide. Also proteolytically cleaved by ADAMTS2 and ADAMTS14, but not by ADAMTS3, at an additional cleavage site downstream of the BMP1 cleavage site. The propeptide plays a role in directing the deposition of this enzyme to elastic fibers, via interaction with tropoelastin. Cleavage by BMP1 to remove the propeptide does not increase enzymatic activity but increases binding to collagen. Cleavage by ADAMTS2 produces a form with reduced collagen-binding activity. In terms of processing, sulfated at Tyr-19 and also at either Tyr-15 or Tyr-16 which enhances binding to collagen.

The protein resides in the secreted. It localises to the extracellular space. It carries out the reaction L-lysyl-[protein] + O2 + H2O = (S)-2-amino-6-oxohexanoyl-[protein] + H2O2 + NH4(+). Responsible for the post-translational oxidative deamination of peptidyl lysine residues in precursors to fibrous collagen and elastin. Regulator of Ras expression. May play a role in tumor suppression. Plays a role in the aortic wall architecture. In Sus scrofa (Pig), this protein is Protein-lysine 6-oxidase.